Reading from the N-terminus, the 211-residue chain is Urease accessory protein UreF (211 aa).

The interval 71–93 (DDADRETDARTPAPAARHASRSQ) is disordered.

Belongs to the UreF family. In terms of assembly, ureD, UreF and UreG form a complex that acts as a GTP-hydrolysis-dependent molecular chaperone, activating the urease apoprotein by helping to assemble the nickel containing metallocenter of UreC. The UreE protein probably delivers the nickel.

The protein localises to the cytoplasm. Its function is as follows. Required for maturation of urease via the functional incorporation of the urease nickel metallocenter. This Mycobacterium tuberculosis (strain ATCC 25177 / H37Ra) protein is Urease accessory protein UreF.